A 157-amino-acid chain; its full sequence is Transcription antitermination protein NusB (157 aa).

This sequence belongs to the NusB family.

Its function is as follows. Involved in transcription antitermination. Required for transcription of ribosomal RNA (rRNA) genes. Binds specifically to the boxA antiterminator sequence of the ribosomal RNA (rrn) operons. In Xylella fastidiosa (strain M12), this protein is Transcription antitermination protein NusB.